A 294-amino-acid chain; its full sequence is MWASFPRPEAIPPGYVGETQHQHRSIMLLNGKSRSWIFLYERLPAPSHDRVKCIAEDVIEFADSFADWSIWNNTKLEDVVDHSTAGMSNLEEGIVKNFSHGRIVLVGDACHKFTSNAGLGLNNGIQDIVAGCNSIRKVVTESGFDLPDVKALEATFKTYYEMRLGPFNDDFIHSKMMTRMQAWANTWYFLFTRYLFFIFSEWILFRFTMLRRVCTGLVLTMHLAKSRLVALLNGFIRSGYHSFIWISAIRPCNDQLLNQLLAGAIQIEILCSLNTWRISSCRAPLLLVFDQARG.

Residue Asp108 participates in FAD binding.

The protein belongs to the paxM FAD-dependent monooxygenase family. FAD is required as a cofactor.

It functions in the pathway mycotoxin biosynthesis. FAD-dependent monooxygenase; part of the satratoxin SC1 cluster involved in the biosynthesis of satratoxins, trichothecene mycotoxins that are associated with human food poisonings. Satratoxins are suggested to be made by products of multiple gene clusters (SC1, SC2 and SC3) that encode 21 proteins in all, including polyketide synthases, acetyltransferases, and other enzymes expected to modify the trichothecene skeleton. SC1 encodes 10 proteins, SAT1 to SAT10. The largest are SAT8, which encodes a putative polyketide synthase (PKS) with a conventional non-reducing architecture, and SAT10, a putative protein containing four ankyrin repeats and thus may be involved in protein scaffolding. The putative short-chain reductase SAT3 may assist the PKS in some capacity. SAT6 contains a secretory lipase domain and acts probably as a trichothecene esterase. SAT5 encodes a putative acetyltransferase, and so, with SAT6, may affect endogenous protection from toxicity. The probable transcription factor SAT9 may regulate the expression of the SC1 cluster. SC2 encodes proteins SAT11 to SAT16, the largest of which encodes the putative reducing PKS SAT13. SAT11 is a cytochrome P450 monooxygenase, while SAT14 and SAT16 are probable acetyltransferases. The SC2 cluster may be regulated by the transcription factor SAT15. SC3 is a small cluster that encodes 5 proteins, SAT17 to SAT21. SAT21 is a putative MFS-type transporter which may have a role in exporting secondary metabolites. The four other proteins putatively encoded in SC3 include the taurine hydroxylase-like protein SAT17, the O-methyltransferase SAT18, the acetyltransferase SAT19, and the Cys6-type zinc finger SAT20, the latter being probably involved in regulation of SC3 expression. In Stachybotrys chartarum (strain CBS 109288 / IBT 7711) (Toxic black mold), this protein is FAD-dependent monooxygenase SAT1.